Consider the following 538-residue polypeptide: Putative outer membrane porin BglH (538 aa).

Residues M1–A25 form the signal peptide. The segment at K52–T82 is disordered. Residues A62–Q73 are compositionally biased toward polar residues.

Belongs to the porin LamB (TC 1.B.3) family.

The protein localises to the cell outer membrane. In terms of biological role, may be a sugar porin with a broad carbohydrate specificity. This chain is Putative outer membrane porin BglH (bglH), found in Shigella sonnei (strain Ss046).